The primary structure comprises 264 residues: Glutamate racemase (264 aa).

Substrate-binding positions include 10-11 and 42-43; these read DS and YG. Residue cysteine 73 is the Proton donor/acceptor of the active site. 74–75 serves as a coordination point for substrate; sequence NT. Cysteine 183 (proton donor/acceptor) is an active-site residue. 184 to 185 contributes to the substrate binding site; it reads TH.

This sequence belongs to the aspartate/glutamate racemases family.

The enzyme catalyses L-glutamate = D-glutamate. Its pathway is cell wall biogenesis; peptidoglycan biosynthesis. Its function is as follows. Provides the (R)-glutamate required for cell wall biosynthesis. The sequence is that of Glutamate racemase from Streptococcus mutans serotype c (strain ATCC 700610 / UA159).